The primary structure comprises 364 residues: Pre-small/secreted glycoprotein (364 aa).

The signal sequence occupies residues 1-32; that stretch reads MGVTGILQLPRDRFKRTSFFLWVIILFQRTFS. N-linked (GlcNAc...) asparagine; by host glycosylation occurs at Asn40. 2 disulfide bridges follow: Cys108/Cys135 and Cys121/Cys147. Residues Asn204, Asn228, Asn238, Asn257, and Asn268 are each glycosylated (N-linked (GlcNAc...) asparagine; by host).

This sequence belongs to the filoviruses glycoprotein family. In terms of assembly, homodimer; disulfide-linked. The homodimers are linked by two disulfide bonds in a parallel orientation. Monomer. In terms of processing, this precursor is processed into mature sGP and delta-peptide by host furin or furin-like proteases. The cleavage site corresponds to the furin optimal cleavage sequence [KR]-X-[KR]-R. N-glycosylated. Post-translationally, O-glycosylated.

The protein resides in the secreted. Functionally, seems to possess an anti-inflammatory activity as it can reverse the barrier-decreasing effects of TNF alpha. Might therefore contribute to the lack of inflammatory reaction seen during infection in spite the of extensive necrosis and massive virus production. Does not seem to be involved in activation of primary macrophages. Does not seem to interact specifically with neutrophils. Viroporin that permeabilizes mammalian cell plasma membranes. It acts by altering permeation of ionic compounds and small molecules. This activity may lead to viral enterotoxic activity. The sequence is that of Pre-small/secreted glycoprotein (GP) from Zaire ebolavirus (strain Eckron-76) (ZEBOV).